Consider the following 164-residue polypeptide: Large ribosomal subunit protein uL11 (164 aa).

This sequence belongs to the universal ribosomal protein uL11 family. As to quaternary structure, part of the ribosomal stalk of the 50S ribosomal subunit. Interacts with L10 and the large rRNA to form the base of the stalk. L10 forms an elongated spine to which L12 dimers bind in a sequential fashion forming a multimeric L10(L12)X complex.

Its function is as follows. Forms part of the ribosomal stalk which helps the ribosome interact with GTP-bound translation factors. The protein is Large ribosomal subunit protein uL11 of Pyrococcus abyssi (strain GE5 / Orsay).